Reading from the N-terminus, the 904-residue chain is Translation initiation factor IF-2 (904 aa).

3 disordered regions span residues Thr102–Glu122, Arg134–Gly252, and His267–Thr316. The span at Arg134–Glu177 shows a compositional bias: basic and acidic residues. A compositionally biased stretch (low complexity) spans Glu178–Ala230. The 170-residue stretch at Ser403–Lys572 folds into the tr-type G domain. The G1 stretch occupies residues Gly412 to Thr419. Gly412–Thr419 provides a ligand contact to GTP. The G2 stretch occupies residues Gly437–His441. Positions Asp458–Gly461 are G3. Residues Asp458 to His462 and Asn512 to Asp515 each bind GTP. A G4 region spans residues Asn512–Asp515. The G5 stretch occupies residues Ser548–Lys550.

It belongs to the TRAFAC class translation factor GTPase superfamily. Classic translation factor GTPase family. IF-2 subfamily.

It localises to the cytoplasm. Functionally, one of the essential components for the initiation of protein synthesis. Protects formylmethionyl-tRNA from spontaneous hydrolysis and promotes its binding to the 30S ribosomal subunits. Also involved in the hydrolysis of GTP during the formation of the 70S ribosomal complex. The polypeptide is Translation initiation factor IF-2 (Xanthomonas axonopodis pv. citri (strain 306)).